A 135-amino-acid chain; its full sequence is ATP synthase epsilon chain (135 aa).

Belongs to the ATPase epsilon chain family. In terms of assembly, F-type ATPases have 2 components, CF(1) - the catalytic core - and CF(0) - the membrane proton channel. CF(1) has five subunits: alpha(3), beta(3), gamma(1), delta(1), epsilon(1). CF(0) has three main subunits: a, b and c.

The protein localises to the cell inner membrane. Produces ATP from ADP in the presence of a proton gradient across the membrane. This Mesorhizobium japonicum (strain LMG 29417 / CECT 9101 / MAFF 303099) (Mesorhizobium loti (strain MAFF 303099)) protein is ATP synthase epsilon chain.